Consider the following 50-residue polypeptide: Nosiheptide precursor (50 aa).

The thiazole-4-carboxylic acid (Ser-Cys) cross-link spans 38 to 39; it reads SC. Positions 38 to 46 form a cross-link, 3-hydroxypyridine-2,5-dicarboxylic acid (Ser-Cys) (with S-47); sequence SCTTCECCC. Positions 38-47 form a cross-link, 3-hydroxypyridine-2,5-dicarboxylic acid (Ser-Ser) (with C-46); the sequence is SCTTCECCCS. Positions 41–42 form a cross-link, thiazole-4-carboxylic acid (Thr-Cys); sequence TC. Position 43 is a 4-hydroxyglutamate (glutamate 43). The segment at residues 43 to 44 is a cross-link (thiazole-4-carboxylic acid (Glu-Cys)); it reads EC. A cross-link (2-(cystein-S-ylcarbonyl)-3-methyl-4-(glutam-5-yloxy)methylindole (Glu-Cys)) is located at residues 43 to 45; that stretch reads ECC. Residues 45-46 constitute a cross-link (thiazole-4-carboxylic acid (Cys-Cys)); sequence CC. The segment at residues 47–48 is a cross-link (thiazole-4-carboxylic acid (Ser-Cys)); the sequence is SC. Serine 49 carries the 2,3-didehydroalanine (Ser) modification. Position 49 is a serine amide; atypical (serine 49).

This sequence belongs to the thiocillin family. The amidation of Ser-49 is produced by the oxidative cleavage of Ser-50 rather than of a glycine, as in eukaryotes.

Functionally, inhibits bacterial protein biosynthesis by binding to ribosomes. Specifically, binds to the complex of 23S rRNA and ribosomal protein L11 (RPLK) in the 50S ribosomal subunit. While allowing a weak binding of elongation factor G (EF-G) to the ribosome and subsequent GTP-hydrolysis, probably impairs conformational changes in both the ribosome and EF-G which are necessary for translocation. In vitro, inhibits Gram-positive bacteria S.aureus strain 209P (MIC=0.0009 ug/ml), S.aureus strain 133 (MIC=0.0019 ug/ml), S.aureus strain B3 (MIC=0.003 ug/ml), S.aureus strain Hb (MIC=0.003 ug/ml), M.citreus strain ATCC 8411 (MIC=0.0038 ug/ml), M.lysodeikticus strain ATCC 4698 (MIC=0.003 ug/ml), S.lutea strain ATCC 9341 (MIC=0.0011 ug/ml), S.faecalis strain ATCC 9790 (MIC=0.0007 ug/ml), S.viridans (MIC=0.0065 ug/ml), S.pyogenes hemolyticus strain Dig7 (MIC=0.00028 ug/ml), D.pneumoniae strain Til (MIC=0.00015 ug/ml), N.catrrhalis (MIC=0.0017 ug/ml), L.casei strain ATCC 6633 (MIC=0.003 ug/ml), B.cereus strain ATCC 6630 (MIC=0.0071 ug/ml) and various isolates of L.monocytogenes. In vitro, inhibits Gram-negative bacterium P.multocida strain A125 (MIC=0.0024 ug/ml) but not M.smegmatis strain ATCC 6630, S.typhimurium, A.aerogenes strain ATCC 8308, P.vulgaris, K.pneumoniae strain ATCC 10031, S.marcescens strain A476, P.aeruginosa strain Bass or B.bronchiseptica strain CN387. Does not inhibit Gram-negative bacterium E.coli strain ATCC 9637 but does inhibit purified ribosomes from E.coli. In vivo, has no systemic effect in mice infected with staphylococci or streptococci when applied orally or subcutaneously. Has a local effect in mice infected subcutaneously or intraperitoneally with staphylococci when applied immediately afterwards. Is not toxic to mice. The protein is Nosiheptide precursor of Streptomyces actuosus.